The primary structure comprises 90 residues: Cell division protein CrgA (90 aa).

Residues 1–25 (MPKARVTKNETAPVSSNPSANRTPV) form a disordered region. Over residues 9 to 22 (NETAPVSSNPSANR) the composition is skewed to polar residues. 2 helical membrane passes run 38–58 (VIMF…YLVG) and 67–87 (LGAW…LMTM).

Belongs to the CrgA family.

The protein localises to the cell membrane. Its function is as follows. Involved in cell division. In Corynebacterium glutamicum (strain ATCC 13032 / DSM 20300 / JCM 1318 / BCRC 11384 / CCUG 27702 / LMG 3730 / NBRC 12168 / NCIMB 10025 / NRRL B-2784 / 534), this protein is Cell division protein CrgA.